A 373-amino-acid chain; its full sequence is DNA replication and repair protein RecF (373 aa).

ATP is bound at residue 30 to 37; it reads GENAQGKT.

The protein belongs to the RecF family.

The protein resides in the cytoplasm. In terms of biological role, the RecF protein is involved in DNA metabolism; it is required for DNA replication and normal SOS inducibility. RecF binds preferentially to single-stranded, linear DNA. It also seems to bind ATP. The chain is DNA replication and repair protein RecF from Bacillus cytotoxicus (strain DSM 22905 / CIP 110041 / 391-98 / NVH 391-98).